The sequence spans 134 residues: UPF0412 protein YaaI (134 aa).

Positions 1 to 23 are cleaved as a signal peptide; that stretch reads MKSVFTLSASLAISLLLCCTAQA.

It belongs to the UPF0412 family.

The polypeptide is UPF0412 protein YaaI (Escherichia coli (strain SMS-3-5 / SECEC)).